Consider the following 398-residue polypeptide: MNPTLPTDSPLLSRSMIAVICAQFLSAFGDNALLFATLALIKQQLYPDWSQPILQMAFVATYIILAPFVGQVADSFAKGRVMMVANGLKLAGALVICFGFNPFLGYTLVGVGAAAYSPAKYGILGEITSGEKLVKANGLMEASTIAAILIGSVAGGILADWHIVAALAVCAVVYAAAVIANLYIPRLPAAHPAVSWTPRAMTQAFFNACVVLWRDGQTRFSLIGTSLFWGAGVTLRFLLVLWVPVALGIADNATPTLLNAMVAVGIVIGAGAAARFVTLETVRRCMPAGILIGVAVAIFALQTTLFNAYALLLIIGVLGGFFVVPLNALLQERGKNSVGAGNAIAVQNLGENTAMLLMLGLYSLAVKVSVPVVGVGIGFGVVFALAISALWLSQRRAK.

Helical transmembrane passes span methionine 16–alanine 36, isoleucine 53–alanine 73, alanine 91–valine 111, leucine 139–alanine 159, isoleucine 163–tyrosine 183, serine 195–tryptophan 213, leucine 227–leucine 247, alanine 253–alanine 273, methionine 286–phenylalanine 306, alanine 310–leucine 330, isoleucine 344–leucine 364, and valine 372–leucine 392.

Belongs to the major facilitator superfamily. LplT (TC 2.A.1.42) family.

Its subcellular location is the cell inner membrane. In terms of biological role, catalyzes the facilitated diffusion of 2-acyl-glycero-3-phosphoethanolamine (2-acyl-GPE) into the cell. This is Lysophospholipid transporter LplT from Serratia proteamaculans (strain 568).